We begin with the raw amino-acid sequence, 123 residues long: Transmembrane protein 254 (123 aa).

3 consecutive transmembrane segments (helical) span residues 15-35 (LFWF…VFWP), 63-83 (NGYW…LVLC), and 95-115 (LLWF…LIAY).

The protein localises to the membrane. The protein is Transmembrane protein 254 of Mus musculus (Mouse).